The chain runs to 196 residues: Large ribosomal subunit protein uL18 (196 aa).

It belongs to the universal ribosomal protein uL18 family. As to quaternary structure, part of the 50S ribosomal subunit. Contacts the 5S and 23S rRNAs.

Functionally, this is one of the proteins that bind and probably mediate the attachment of the 5S RNA into the large ribosomal subunit, where it forms part of the central protuberance. The protein is Large ribosomal subunit protein uL18 of Desulfurococcus amylolyticus (strain DSM 18924 / JCM 16383 / VKM B-2413 / 1221n) (Desulfurococcus kamchatkensis).